Reading from the N-terminus, the 159-residue chain is Transcription elongation factor GreA (159 aa).

A coiled-coil region spans residues 14–76 (VKKLEEELEY…QLENMLRNAN (63 aa)).

It belongs to the GreA/GreB family.

Functionally, necessary for efficient RNA polymerase transcription elongation past template-encoded arresting sites. The arresting sites in DNA have the property of trapping a certain fraction of elongating RNA polymerases that pass through, resulting in locked ternary complexes. Cleavage of the nascent transcript by cleavage factors such as GreA or GreB allows the resumption of elongation from the new 3'terminus. GreA releases sequences of 2 to 3 nucleotides. The chain is Transcription elongation factor GreA from Clostridium novyi (strain NT).